Consider the following 665-residue polypeptide: Long chain acyl-CoA synthetase 3 (665 aa).

228 to 239 (IMYTSGTTGDPK) serves as a coordination point for ATP. The fatty acid-binding stretch occupies residues 495 to 519 (DGWLHTGDVGEWQPDGAMKIIDRKK).

Belongs to the ATP-dependent AMP-binding enzyme family. Mg(2+) is required as a cofactor.

The catalysed reaction is a long-chain fatty acid + ATP + CoA = a long-chain fatty acyl-CoA + AMP + diphosphate. Its pathway is lipid metabolism; fatty acid metabolism. Functionally, activation of long-chain fatty acids for both synthesis of cellular lipids, and degradation via beta-oxidation. Preferentially uses palmitate, palmitoleate, oleate and linoleate. The protein is Long chain acyl-CoA synthetase 3 (LACS3) of Arabidopsis thaliana (Mouse-ear cress).